Reading from the N-terminus, the 691-residue chain is Pleckstrin homology domain-containing family G member 7 (691 aa).

Disordered regions lie at residues 1 to 48 (MEKT…ISTS) and 109 to 140 (TSEPERALNAADSLEPQTRPTDKYLPPELQPV). In terms of domain architecture, DH spans 313–488 (MIFMNTLRYL…EGKVKWLDNF (176 aa)). Asn395 is a glycosylation site (N-linked (GlcNAc...) asparagine). Residues 535–668 (HLLYEGKLTL…WMAQITTAIS (134 aa)) enclose the PH domain.

In Homo sapiens (Human), this protein is Pleckstrin homology domain-containing family G member 7.